The chain runs to 222 residues: Probable transaldolase (222 aa).

Lys91 acts as the Schiff-base intermediate with substrate in catalysis.

Belongs to the transaldolase family. Type 3B subfamily.

Its subcellular location is the cytoplasm. The enzyme catalyses D-sedoheptulose 7-phosphate + D-glyceraldehyde 3-phosphate = D-erythrose 4-phosphate + beta-D-fructose 6-phosphate. The protein operates within carbohydrate degradation; pentose phosphate pathway; D-glyceraldehyde 3-phosphate and beta-D-fructose 6-phosphate from D-ribose 5-phosphate and D-xylulose 5-phosphate (non-oxidative stage): step 2/3. Functionally, transaldolase is important for the balance of metabolites in the pentose-phosphate pathway. This is Probable transaldolase from Chlorobium luteolum (strain DSM 273 / BCRC 81028 / 2530) (Pelodictyon luteolum).